The sequence spans 431 residues: Adenylosuccinate synthetase (431 aa).

GTP contacts are provided by residues 12-18 (GDEGKGK) and 40-42 (GHT). Asp-13 acts as the Proton acceptor in catalysis. Mg(2+) contacts are provided by Asp-13 and Gly-40. IMP contacts are provided by residues 13–16 (DEGK), 38–41 (NAGH), Thr-129, Arg-143, Gln-224, Thr-239, and Arg-303. The active-site Proton donor is the His-41. 299–305 (VTTGRAR) is a binding site for substrate. GTP contacts are provided by residues Arg-305, 331 to 333 (KLD), and 413 to 415 (GVG).

This sequence belongs to the adenylosuccinate synthetase family. In terms of assembly, homodimer. It depends on Mg(2+) as a cofactor.

The protein resides in the cytoplasm. The catalysed reaction is IMP + L-aspartate + GTP = N(6)-(1,2-dicarboxyethyl)-AMP + GDP + phosphate + 2 H(+). It functions in the pathway purine metabolism; AMP biosynthesis via de novo pathway; AMP from IMP: step 1/2. In terms of biological role, plays an important role in the de novo pathway of purine nucleotide biosynthesis. Catalyzes the first committed step in the biosynthesis of AMP from IMP. The sequence is that of Adenylosuccinate synthetase from Mycobacterium sp. (strain KMS).